Reading from the N-terminus, the 987-residue chain is SNF2 domain-containing protein ENL1 (987 aa).

2 disordered regions span residues 1-172 and 224-245; these read MASP…AYGG and FGDY…ENHA. Composition is skewed to pro residues over residues 18–27 and 51–71; these read TPPAPTPLAA and NPNP…PQEP. Positions 99-110 are enriched in basic and acidic residues; that stretch reads DSIRDILDDLTT. Residues 141–156 show a composition bias toward polar residues; that stretch reads PSQSQLNDGTKPSSSF. Acidic residues predominate over residues 226 to 237; the sequence is DYDDEDDIDQDA. In terms of domain architecture, Helicase ATP-binding spans 292–466; sequence WVLHCRGTGG…WALFYFCCPE (175 aa). Position 305 to 312 (305 to 312) interacts with ATP; the sequence is DDMGLGKT. The short motif at 417 to 420 is the DEAH box element; sequence DEGH. Residues 645-801 enclose the Helicase C-terminal domain; the sequence is SLLQNLVSEG…TRYFSKRDIQ (157 aa).

This sequence belongs to the SNF2/RAD54 helicase family. In terms of tissue distribution, expressed in ovaries, roots, shoots and leaves.

It localises to the cytoplasm. Its subcellular location is the chromosome. DNA helicase that acts as an essential component of the spindle assembly checkpoint. Plays an indispensable role in the development of seed endosperm. Is required to secure sister chromosome separation during endosperm syncytial mitosis, which involves extremely rapid free nuclear cycles. The chain is SNF2 domain-containing protein ENL1 from Oryza sativa subsp. japonica (Rice).